The primary structure comprises 145 residues: Sperm mitochondrial-associated cysteine-rich protein (145 aa).

Phosphoserine is present on residues Ser-38, Ser-45, Ser-113, and Ser-131. Residues 105-145 (CSSENKTESDSDGSGQTQDRGAQTQQSPQGGQGNWNQKKTK) are disordered. Over residues 116-145 (DGSGQTQDRGAQTQQSPQGGQGNWNQKKTK) the composition is skewed to polar residues.

As to expression, testis. Selectively expressed in the spermatids of seminiferous tubules and in flagella of epididymal sperm.

It localises to the cytoplasm. The protein localises to the mitochondrion membrane. In terms of biological role, involved in sperm motility. Its absence is associated with genetic background dependent male infertility. Infertility may be due to reduced sperm motility in the female reproductive tract and inability to penetrate the oocyte zona pellucida. This chain is Sperm mitochondrial-associated cysteine-rich protein (Smcp), found in Rattus norvegicus (Rat).